A 590-amino-acid chain; its full sequence is L-fucose isomerase (590 aa).

Active-site proton acceptor residues include E337 and D361. Mn(2+) is bound by residues E337, D361, and H528.

Belongs to the L-fucose isomerase family. Mn(2+) is required as a cofactor.

It is found in the cytoplasm. The catalysed reaction is L-fucose = L-fuculose. It functions in the pathway carbohydrate degradation; L-fucose degradation; L-lactaldehyde and glycerone phosphate from L-fucose: step 1/3. Converts the aldose L-fucose into the corresponding ketose L-fuculose. This Bacteroides fragilis (strain ATCC 25285 / DSM 2151 / CCUG 4856 / JCM 11019 / LMG 10263 / NCTC 9343 / Onslow / VPI 2553 / EN-2) protein is L-fucose isomerase.